We begin with the raw amino-acid sequence, 424 residues long: Cuticlin-1 (424 aa).

Residues 1-18 (MTWKPIICLAALVLSASA) form the signal peptide. Residues 19 to 392 (IPVDNNVEGE…ATSTGICLTP (374 aa)) lie on the Extracellular side of the membrane. Residues 32–277 (ECGPNSITVN…PTCSEPQGFG (246 aa)) form the ZP domain. C197 and C252 are oxidised to a cystine. A run of 4 repeats spans residues 302-305 (AAPV), 307-311 (AAAPV), 312-315 (AAPV), and 320-323 (AAPA). The segment at 302–323 (AAPVAAAAPVAAPVAAAAAAPA) is 4 X 4 AA repeats of A-A-P-[AVI]. The chain crosses the membrane as a helical span at residues 393–413 (IGFASFLGIGTIVATALSATI). The Cytoplasmic portion of the chain corresponds to 414–424 (FYVARPTSHKH).

It is found in the cell membrane. The protein resides in the secreted. Functionally, component of the cuticles, which contributes to the formation of extracellular envelopes protecting the organism from the environment. Plays a role in alae formation in dauer larvae. The polypeptide is Cuticlin-1 (Caenorhabditis elegans).